A 152-amino-acid chain; its full sequence is Flagellar assembly factor FliW (152 aa).

The protein belongs to the FliW family. As to quaternary structure, interacts with translational regulator CsrA and flagellin(s).

The protein localises to the cytoplasm. Functionally, acts as an anti-CsrA protein, binds CsrA and prevents it from repressing translation of its target genes, one of which is flagellin. Binds to flagellin and participates in the assembly of the flagellum. The polypeptide is Flagellar assembly factor FliW (Desulfitobacterium hafniense (strain Y51)).